The sequence spans 209 residues: Lipid A acyltransferase PagP (209 aa).

The signal sequence occupies residues 1 to 24; the sequence is MHLKRALITLSLITLPIIPFSSYA. Active-site residues include H81, D124, and S125.

The protein belongs to the lipid A palmitoyltransferase family. Homodimer.

The protein resides in the cell outer membrane. The enzyme catalyses a lipid A + a 1,2-diacyl-sn-glycero-3-phosphocholine = a hepta-acyl lipid A + a 2-acyl-sn-glycero-3-phosphocholine. It catalyses the reaction a lipid IVA + a 1,2-diacyl-sn-glycero-3-phosphocholine = a lipid IVB + a 2-acyl-sn-glycero-3-phosphocholine. The catalysed reaction is a lipid IIA + a 1,2-diacyl-sn-glycero-3-phosphocholine = a lipid IIB + a 2-acyl-sn-glycero-3-phosphocholine. Its function is as follows. Transfers a fatty acid residue from the sn-1 position of a phospholipid to the N-linked hydroxyfatty acid chain on the proximal unit of lipid A or its precursors. The protein is Lipid A acyltransferase PagP of Pectobacterium parmentieri (strain WPP163) (Pectobacterium wasabiae (strain WPP163)).